A 406-amino-acid polypeptide reads, in one-letter code: Alpha-1-antitrypsin (406 aa).

A signal peptide spans 1–24 (MTSSISWGLLLLAGLCCLVPSFLA). Phosphoserine is present on S33. Residues N59, N96, and N260 are each glycosylated (N-linked (GlcNAc...) asparagine). Residues 362–381 (GTTVLEAVPMSIPPDVCFKN) form an RCL region. Phosphoserine is present on S372.

This sequence belongs to the serpin family. Interacts with CELA2A. Interacts with ERGIC3 and LMAN1/ERGIC53. Interacts with PRSS1/Trypsin. In terms of tissue distribution, plasma.

The protein localises to the secreted. Inhibitor of serine proteases. Can inhibit elastase, trypsin, chymotrypsin and plasmin. The sequence is that of Alpha-1-antitrypsin from Meriones unguiculatus (Mongolian jird).